Consider the following 269-residue polypeptide: GTP cyclohydrolase FolE2 2 (269 aa).

It belongs to the GTP cyclohydrolase IV family.

It catalyses the reaction GTP + H2O = 7,8-dihydroneopterin 3'-triphosphate + formate + H(+). The protein operates within cofactor biosynthesis; 7,8-dihydroneopterin triphosphate biosynthesis; 7,8-dihydroneopterin triphosphate from GTP: step 1/1. Converts GTP to 7,8-dihydroneopterin triphosphate. This Burkholderia lata (strain ATCC 17760 / DSM 23089 / LMG 22485 / NCIMB 9086 / R18194 / 383) protein is GTP cyclohydrolase FolE2 2.